We begin with the raw amino-acid sequence, 122 residues long: MIQQESRLKVADNTGAKEILTIRVLGGSGRRYAGIGDVIVATVKDAIPGGNVKKGDVVKAVIVRTKKERRRADGSYIKFDENAAVILKNDGDPRGTRIFGPVGRELRDKKFMKIVSLAPEVL.

Belongs to the universal ribosomal protein uL14 family. In terms of assembly, part of the 50S ribosomal subunit. Forms a cluster with proteins L3 and L19. In the 70S ribosome, L14 and L19 interact and together make contacts with the 16S rRNA in bridges B5 and B8.

In terms of biological role, binds to 23S rRNA. Forms part of two intersubunit bridges in the 70S ribosome. This is Large ribosomal subunit protein uL14 from Paenarthrobacter aurescens (strain TC1).